The following is a 368-amino-acid chain: Probable endopolygalacturonase A (368 aa).

The signal sequence occupies residues 1-18 (MRSVKLFGLAALGSLGAA). Residues 19-31 (APAPSRVSDLTKR) constitute a propeptide that is removed on maturation. Cysteine 35 and cysteine 50 are joined by a disulfide. PbH1 repeat units lie at residues 140–162 (LEDS…SVQA), 167–192 (LIDI…DISE), 193–214 (STGV…AINS), 215–235 (GENI…SIGS), 244–265 (VKNV…RIKT), 273–295 (VSQV…VIEQ), and 307–352 (TTGV…DITG). The active-site Proton donor is the aspartate 207. A disulfide bond links cysteine 209 and cysteine 225. Histidine 229 is an active-site residue. Asparagine 246 carries N-linked (GlcNAc...) asparagine glycosylation. Disulfide bonds link cysteine 335–cysteine 340 and cysteine 359–cysteine 368.

Belongs to the glycosyl hydrolase 28 family.

It localises to the secreted. It catalyses the reaction (1,4-alpha-D-galacturonosyl)n+m + H2O = (1,4-alpha-D-galacturonosyl)n + (1,4-alpha-D-galacturonosyl)m.. Functionally, involved in maceration and soft-rotting of plant tissue. Hydrolyzes the 1,4-alpha glycosidic bonds of de-esterified pectate in the smooth region of the plant cell wall. This chain is Probable endopolygalacturonase A (pgaA), found in Aspergillus fumigatus (strain CBS 144.89 / FGSC A1163 / CEA10) (Neosartorya fumigata).